The sequence spans 108 residues: Glutaredoxin-1 (108 aa).

One can recognise a Glutaredoxin domain in the interval 3–106 (EEFVQQRLAN…DILSSIGVLR (104 aa)). C23 and C26 form a disulfide bridge.

Belongs to the glutaredoxin family.

The protein localises to the virion. Has thioltransferase and dehydroascorbate reductase activities. In Ectromelia virus (strain Moscow) (ECTV), this protein is Glutaredoxin-1 (OPG075).